Here is a 231-residue protein sequence, read N- to C-terminus: uncharacterized protein (231 aa).

The protein belongs to the DnaA family. HdA subfamily.

This is an uncharacterized protein from Haemophilus influenzae (strain ATCC 51907 / DSM 11121 / KW20 / Rd).